Reading from the N-terminus, the 283-residue chain is Diaminopimelate epimerase (283 aa).

Substrate-binding residues include asparagine 14, glutamine 47, and asparagine 67. Cysteine 76 serves as the catalytic Proton donor. Substrate-binding positions include 77–78 (GN), asparagine 164, asparagine 197, and 215–216 (ER). The active-site Proton acceptor is cysteine 224. Residue 225–226 (GT) participates in substrate binding.

Belongs to the diaminopimelate epimerase family. In terms of assembly, homodimer.

Its subcellular location is the cytoplasm. It catalyses the reaction (2S,6S)-2,6-diaminopimelate = meso-2,6-diaminopimelate. The protein operates within amino-acid biosynthesis; L-lysine biosynthesis via DAP pathway; DL-2,6-diaminopimelate from LL-2,6-diaminopimelate: step 1/1. Catalyzes the stereoinversion of LL-2,6-diaminopimelate (L,L-DAP) to meso-diaminopimelate (meso-DAP), a precursor of L-lysine and an essential component of the bacterial peptidoglycan. The sequence is that of Diaminopimelate epimerase from Neisseria meningitidis serogroup A / serotype 4A (strain DSM 15465 / Z2491).